A 144-amino-acid chain; its full sequence is Gastric inhibitory polypeptide (144 aa).

Residues 1–21 (MVALKTCSLLLVLLFLAVGLG) form the signal peptide. 2 propeptides span residues 22–42 (EKEEVEFRSHAKFAGPRPRGP) and 87–144 (EARA…LRSQ). The interval 94-113 (AGQSQGKEDKEAQESSLPKS) is disordered.

It belongs to the glucagon family.

The protein resides in the secreted. Functionally, potent stimulator of insulin secretion and relatively poor inhibitor of gastric acid secretion. This is Gastric inhibitory polypeptide (Gip) from Mus musculus (Mouse).